The primary structure comprises 321 residues: ATP-dependent 6-phosphofructokinase (321 aa).

Gly-12 lines the ATP pocket. ADP is bound by residues 22–26 (RGVVR) and 55–60 (RYSVSD). ATP-binding positions include 73–74 (RF) and 103–106 (GDGS). Asp-104 is a Mg(2+) binding site. Residue 127–129 (TID) participates in substrate binding. The Proton acceptor role is filled by Asp-129. Position 156 (Arg-156) interacts with ADP. Substrate-binding positions include Arg-164 and 171-173 (MGR). ADP is bound by residues 187-189 (GCE) and 215-217 (KRH). Substrate contacts are provided by residues Glu-224, Arg-245, and 251 to 254 (HVQR).

This sequence belongs to the phosphofructokinase type A (PFKA) family. ATP-dependent PFK group I subfamily. Prokaryotic clade 'B1' sub-subfamily. In terms of assembly, homotetramer. Mg(2+) is required as a cofactor.

Its subcellular location is the cytoplasm. It catalyses the reaction beta-D-fructose 6-phosphate + ATP = beta-D-fructose 1,6-bisphosphate + ADP + H(+). It participates in carbohydrate degradation; glycolysis; D-glyceraldehyde 3-phosphate and glycerone phosphate from D-glucose: step 3/4. Allosterically activated by ADP and other diphosphonucleosides, and allosterically inhibited by phosphoenolpyruvate. Functionally, catalyzes the phosphorylation of D-fructose 6-phosphate to fructose 1,6-bisphosphate by ATP, the first committing step of glycolysis. The chain is ATP-dependent 6-phosphofructokinase from Mannheimia succiniciproducens (strain KCTC 0769BP / MBEL55E).